Consider the following 485-residue polypeptide: Glutamate--tRNA ligase (485 aa).

A 'HIGH' region motif is present at residues 12 to 22 (PSPTGEPHVGT). Positions 253-257 (KLSKR) match the 'KMSKS' region motif. K256 contacts ATP.

This sequence belongs to the class-I aminoacyl-tRNA synthetase family. Glutamate--tRNA ligase type 1 subfamily. As to quaternary structure, monomer.

The protein resides in the cytoplasm. It carries out the reaction tRNA(Glu) + L-glutamate + ATP = L-glutamyl-tRNA(Glu) + AMP + diphosphate. Catalyzes the attachment of glutamate to tRNA(Glu) in a two-step reaction: glutamate is first activated by ATP to form Glu-AMP and then transferred to the acceptor end of tRNA(Glu). The chain is Glutamate--tRNA ligase from Sinorhizobium medicae (strain WSM419) (Ensifer medicae).